The sequence spans 331 residues: Minor capsid protein A1 (331 aa).

It is found in the virion. In terms of biological role, minor capsid protein. In Escherichia coli (Bacteriophage SP), this protein is Minor capsid protein A1.